The primary structure comprises 309 residues: Protein FdhE (309 aa).

This sequence belongs to the FdhE family.

It localises to the cytoplasm. Its function is as follows. Necessary for formate dehydrogenase activity. This chain is Protein FdhE, found in Escherichia coli O45:K1 (strain S88 / ExPEC).